The following is a 483-amino-acid chain: Wax ester synthase/diacylglycerol acyltransferase 10 (483 aa).

Residues 1-203 are Cytoplasmic-facing; that stretch reads MTKEEVEEEP…SINAVYYAVR (203 aa). His143 acts as the Proton acceptor in catalysis. The helical transmembrane segment at 204–222 threads the bilayer; it reads LIWNTIVDLLLLWATSLFF. At 223 to 483 the chain is on the lumenal side; the sequence is KDTETPISEG…MKDTLSGKSD (261 aa). N-linked (GlcNAc...) asparagine glycosylation is found at Asn394 and Asn399.

It in the N-terminal section; belongs to the long-chain O-acyltransferase family. As to expression, mostly expressed in roots.

It is found in the cell membrane. The protein resides in the endoplasmic reticulum membrane. The catalysed reaction is an acyl-CoA + a 1,2-diacyl-sn-glycerol = a triacyl-sn-glycerol + CoA. The enzyme catalyses a long chain fatty alcohol + a fatty acyl-CoA = a wax ester + CoA. The protein operates within glycerolipid metabolism; triacylglycerol biosynthesis. It functions in the pathway lipid metabolism. Functionally, bifunctional wax ester synthase/diacylglycerol acyltransferase. Involved in cuticular wax biosynthesis. This is Wax ester synthase/diacylglycerol acyltransferase 10 from Arabidopsis thaliana (Mouse-ear cress).